The following is a 698-amino-acid chain: Serotransferrin (698 aa).

Positions 1–19 are cleaved as a signal peptide; sequence MRLAVGALLVCAVLGLCLA. Transferrin-like domains follow at residues 25–347 and 361–683; these read VRWC…NLRE and VKWC…NLRK. 2 cysteine pairs are disulfide-bonded: Cys-28–Cys-67 and Cys-38–Cys-58. Dimethylated arginine is present on Arg-42. The O-linked (GalNAc...) serine glycan is linked to Ser-51. Residues Asp-82 and Tyr-114 each contribute to the Fe(3+) site. Cystine bridges form between Cys-137/Cys-213, Cys-156/Cys-350, Cys-177/Cys-193, Cys-180/Cys-196, Cys-190/Cys-198, Cys-246/Cys-260, Cys-358/Cys-615, Cys-364/Cys-396, Cys-374/Cys-387, Cys-421/Cys-693, Cys-437/Cys-656, Cys-469/Cys-542, Cys-493/Cys-684, Cys-503/Cys-517, Cys-514/Cys-525, Cys-582/Cys-596, and Cys-634/Cys-639. Residues Thr-139, Arg-143, Ala-145, and Gly-146 each coordinate hydrogencarbonate. Tyr-207 contacts Fe(3+). Residue His-268 coordinates Fe(3+). Phosphoserine is present on Ser-389. The Fe(3+) site is built by Asp-411 and Tyr-445. Residues Thr-471, Arg-475, Ala-477, and Gly-478 each contribute to the hydrogencarbonate site. Residue Tyr-536 participates in Fe(3+) binding. His-604 provides a ligand contact to Fe(3+). Asn-630 carries N-linked (GlcNAc...) asparagine glycosylation. At Ser-685 the chain carries Phosphoserine.

It belongs to the transferrin family. In terms of assembly, monomer. Part of a complex composed of SLC40A1/ferroportin, TF/transferrin and HEPH/hephaestin that transfers iron from cells to transferrin. In terms of tissue distribution, expressed by the liver and secreted in plasma.

The protein resides in the secreted. Functionally, transferrins are iron binding transport proteins which can bind two Fe(3+) ions in association with the binding of an anion, usually bicarbonate. It is responsible for the transport of iron from sites of absorption and heme degradation to those of storage and utilization. Serum transferrin may also have a further role in stimulating cell proliferation. In Pan troglodytes (Chimpanzee), this protein is Serotransferrin (TF).